The chain runs to 171 residues: tRNA-specific adenosine deaminase (171 aa).

A CMP/dCMP-type deaminase domain is found at 6–133 (EEQTYFMQEA…ERLNHRVQVE (128 aa)). A Zn(2+)-binding site is contributed by His57. Glu59 acts as the Proton donor in catalysis. Positions 87 and 90 each coordinate Zn(2+).

The protein belongs to the cytidine and deoxycytidylate deaminase family. As to quaternary structure, homodimer. The cofactor is Zn(2+).

The enzyme catalyses adenosine(34) in tRNA + H2O + H(+) = inosine(34) in tRNA + NH4(+). In terms of biological role, catalyzes the deamination of adenosine to inosine at the wobble position 34 of tRNA(Arg2). This is tRNA-specific adenosine deaminase from Streptococcus pyogenes serotype M3 (strain ATCC BAA-595 / MGAS315).